Here is a 162-residue protein sequence, read N- to C-terminus: Interleukin-15 (162 aa).

Residues 1–29 form the signal peptide; that stretch reads MRISKPHLRSVSIQCYLCLLLNSHFLTEA. The propeptide occupies 30–48; the sequence is GIHVFILGCFSAGLPKTEA. Cystine bridges form between cysteine 83–cysteine 133 and cysteine 90–cysteine 136. A glycan (N-linked (GlcNAc...) asparagine) is linked at asparagine 127.

It belongs to the IL-15/IL-21 family.

It is found in the secreted. In terms of biological role, cytokine that plays a major role in the development of inflammatory and protective immune responses to microbial invaders and parasites by modulating immune cells of both the innate and adaptive immune systems. Stimulates the proliferation of natural killer cells, T-cells and B-cells and promotes the secretion of several cytokines. In monocytes, induces the production of IL8 and monocyte chemotactic protein 1/CCL2, two chemokines that attract neutrophils and monocytes respectively to sites of infection. Unlike most cytokines, which are secreted in soluble form, IL15 is expressed in association with its high affinity IL15RA on the surface of IL15-producing cells and delivers signals to target cells that express IL2RB and IL2RG receptor subunits. Binding to its receptor triggers the phosphorylation of JAK1 and JAK3 and the recruitment and subsequent phosphorylation of signal transducer and activator of transcription-3/STAT3 and STAT5. In mast cells, induces the rapid tyrosine phosphorylation of STAT6 and thereby controls mast cell survival and release of cytokines such as IL4. This Macaca thibetana (Pere David's macaque) protein is Interleukin-15 (IL15).